Here is a 128-residue protein sequence, read N- to C-terminus: Large ribosomal subunit protein bL20c (128 aa).

The protein belongs to the bacterial ribosomal protein bL20 family.

It localises to the plastid. It is found in the chloroplast. Its function is as follows. Binds directly to 23S ribosomal RNA and is necessary for the in vitro assembly process of the 50S ribosomal subunit. It is not involved in the protein synthesizing functions of that subunit. The protein is Large ribosomal subunit protein bL20c of Nicotiana sylvestris (Wood tobacco).